Here is a 507-residue protein sequence, read N- to C-terminus: Probable cytosol aminopeptidase (507 aa).

K254 and D259 together coordinate Mn(2+). K266 is a catalytic residue. Residues D277, D336, and E338 each coordinate Mn(2+). Residue R340 is part of the active site. Positions 486 to 507 (PRKAQPKARSAKRSKPVSRTRA) are disordered. The segment covering 489-507 (AQPKARSAKRSKPVSRTRA) has biased composition (basic residues).

The protein belongs to the peptidase M17 family. The cofactor is Mn(2+).

It localises to the cytoplasm. The enzyme catalyses Release of an N-terminal amino acid, Xaa-|-Yaa-, in which Xaa is preferably Leu, but may be other amino acids including Pro although not Arg or Lys, and Yaa may be Pro. Amino acid amides and methyl esters are also readily hydrolyzed, but rates on arylamides are exceedingly low.. It carries out the reaction Release of an N-terminal amino acid, preferentially leucine, but not glutamic or aspartic acids.. Its function is as follows. Presumably involved in the processing and regular turnover of intracellular proteins. Catalyzes the removal of unsubstituted N-terminal amino acids from various peptides. The sequence is that of Probable cytosol aminopeptidase from Polaromonas sp. (strain JS666 / ATCC BAA-500).